Here is a 551-residue protein sequence, read N- to C-terminus: HTH-type transcriptional regulator SgrR (551 aa).

An HTH marR-type domain is found at 1-116 (MPSARLQQQF…LVSHLGRSFR (116 aa)). Positions 26 to 49 (LNELAALLSCSRRHMRTLLNTMQD) form a DNA-binding region, H-T-H motif. Residues 163–492 (ELEADIAHHW…IDWQADAARW (330 aa)) form a solute-binding region.

Its function is as follows. Activates the small RNA gene sgrS under glucose-phosphate stress conditions as well as yfdZ. Represses its own transcription under both stress and non-stress conditions. Might act as a sensor of the intracellular accumulation of phosphoglucose by binding these molecules in its C-terminal solute-binding domain. The polypeptide is HTH-type transcriptional regulator SgrR (Shigella flexneri serotype 5b (strain 8401)).